The primary structure comprises 115 residues: Probable 4-amino-4-deoxy-L-arabinose-phosphoundecaprenol flippase subunit ArnE (115 aa).

A run of 3 helical transmembrane segments spans residues Pro-42–Leu-62, Val-65–Ala-85, and Val-93–Gly-112. The 68-residue stretch at Leu-46–Arg-113 folds into the EamA domain.

The protein belongs to the ArnE family. As to quaternary structure, heterodimer of ArnE and ArnF.

It is found in the cell inner membrane. It participates in bacterial outer membrane biogenesis; lipopolysaccharide biosynthesis. Its function is as follows. Translocates 4-amino-4-deoxy-L-arabinose-phosphoundecaprenol (alpha-L-Ara4N-phosphoundecaprenol) from the cytoplasmic to the periplasmic side of the inner membrane. The sequence is that of Probable 4-amino-4-deoxy-L-arabinose-phosphoundecaprenol flippase subunit ArnE from Pseudomonas aeruginosa (strain UCBPP-PA14).